The primary structure comprises 180 residues: Large ribosomal subunit protein uL5 (180 aa).

It belongs to the universal ribosomal protein uL5 family. In terms of assembly, part of the 50S ribosomal subunit; part of the 5S rRNA/L5/L18/L25 subcomplex. Contacts the 5S rRNA and the P site tRNA. Forms a bridge to the 30S subunit in the 70S ribosome.

Functionally, this is one of the proteins that bind and probably mediate the attachment of the 5S RNA into the large ribosomal subunit, where it forms part of the central protuberance. In the 70S ribosome it contacts protein S13 of the 30S subunit (bridge B1b), connecting the 2 subunits; this bridge is implicated in subunit movement. Contacts the P site tRNA; the 5S rRNA and some of its associated proteins might help stabilize positioning of ribosome-bound tRNAs. The polypeptide is Large ribosomal subunit protein uL5 (Symbiobacterium thermophilum (strain DSM 24528 / JCM 14929 / IAM 14863 / T)).